A 180-amino-acid chain; its full sequence is Adenine phosphoribosyltransferase (180 aa).

It belongs to the purine/pyrimidine phosphoribosyltransferase family. As to quaternary structure, homodimer.

The protein localises to the cytoplasm. It carries out the reaction AMP + diphosphate = 5-phospho-alpha-D-ribose 1-diphosphate + adenine. The protein operates within purine metabolism; AMP biosynthesis via salvage pathway; AMP from adenine: step 1/1. In terms of biological role, catalyzes a salvage reaction resulting in the formation of AMP, that is energically less costly than de novo synthesis. In Mycoplasma genitalium (strain ATCC 33530 / DSM 19775 / NCTC 10195 / G37) (Mycoplasmoides genitalium), this protein is Adenine phosphoribosyltransferase.